Consider the following 258-residue polypeptide: Tryptophan synthase alpha chain (258 aa).

Catalysis depends on proton acceptor residues Glu50 and Asp61.

The protein belongs to the TrpA family. Tetramer of two alpha and two beta chains.

It carries out the reaction (1S,2R)-1-C-(indol-3-yl)glycerol 3-phosphate + L-serine = D-glyceraldehyde 3-phosphate + L-tryptophan + H2O. Its pathway is amino-acid biosynthesis; L-tryptophan biosynthesis; L-tryptophan from chorismate: step 5/5. Its function is as follows. The alpha subunit is responsible for the aldol cleavage of indoleglycerol phosphate to indole and glyceraldehyde 3-phosphate. The chain is Tryptophan synthase alpha chain from Clostridium beijerinckii (strain ATCC 51743 / NCIMB 8052) (Clostridium acetobutylicum).